An 867-amino-acid polypeptide reads, in one-letter code: Armadillo repeat-containing protein 2 (867 aa).

2 disordered regions span residues 1-115 (MLSP…CFSF) and 214-252 (TSLP…AVPK). Polar residues-rich tracts occupy residues 18 to 28 (PSVSKQKTSAE), 40 to 50 (VRTQRPFTPQE), and 60 to 69 (SSRTSENRPP). Composition is skewed to low complexity over residues 70 to 81 (SSFSLHASSFES) and 234 to 243 (SSCPSSSDLS). 12 ARM repeats span residues 262-301 (IEVD…HALE), 304-344 (NMLG…ALKV), 363-403 (EKND…SIKF), 408-449 (LGFL…HLLV), 462-503 (SLVR…KLTS), 506-547 (DCCT…NLTA), 551-589 (QARE…QRGE), 591-616 (HRAQ…NIAI), 619-662 (GVGP…NLSY), 664-705 (QVKN…NLSQ), 707-746 (HDVC…NLTV), and 748-790 (KDKR…NFSE).

As to expression, expressed at higher level in testis.

Its function is as follows. Required for sperm flagellum axoneme organization and function. Involved in axonemal central pair complex assembly and/or stability. This Homo sapiens (Human) protein is Armadillo repeat-containing protein 2.